Consider the following 372-residue polypeptide: Queuine tRNA-ribosyltransferase (372 aa).

Aspartate 89 serves as the catalytic Proton acceptor. Substrate is bound by residues 89-93 (DSGGF), aspartate 143, glutamine 185, and glycine 212. The interval 243-249 (GVGKPED) is RNA binding. The Nucleophile role is filled by aspartate 262. The interval 267-271 (TRNAR) is RNA binding; important for wobble base 34 recognition. Positions 300, 302, 305, and 331 each coordinate Zn(2+).

The protein belongs to the queuine tRNA-ribosyltransferase family. As to quaternary structure, homodimer. Within each dimer, one monomer is responsible for RNA recognition and catalysis, while the other monomer binds to the replacement base PreQ1. Requires Zn(2+) as cofactor.

The catalysed reaction is 7-aminomethyl-7-carbaguanine + guanosine(34) in tRNA = 7-aminomethyl-7-carbaguanosine(34) in tRNA + guanine. The protein operates within tRNA modification; tRNA-queuosine biosynthesis. In terms of biological role, catalyzes the base-exchange of a guanine (G) residue with the queuine precursor 7-aminomethyl-7-deazaguanine (PreQ1) at position 34 (anticodon wobble position) in tRNAs with GU(N) anticodons (tRNA-Asp, -Asn, -His and -Tyr). Catalysis occurs through a double-displacement mechanism. The nucleophile active site attacks the C1' of nucleotide 34 to detach the guanine base from the RNA, forming a covalent enzyme-RNA intermediate. The proton acceptor active site deprotonates the incoming PreQ1, allowing a nucleophilic attack on the C1' of the ribose to form the product. After dissociation, two additional enzymatic reactions on the tRNA convert PreQ1 to queuine (Q), resulting in the hypermodified nucleoside queuosine (7-(((4,5-cis-dihydroxy-2-cyclopenten-1-yl)amino)methyl)-7-deazaguanosine). This is Queuine tRNA-ribosyltransferase from Chromohalobacter salexigens (strain ATCC BAA-138 / DSM 3043 / CIP 106854 / NCIMB 13768 / 1H11).